We begin with the raw amino-acid sequence, 329 residues long: Tetraacyldisaccharide 4'-kinase (329 aa).

ATP is bound at residue 58–65 (SVGGTGKT).

Belongs to the LpxK family.

It catalyses the reaction a lipid A disaccharide + ATP = a lipid IVA + ADP + H(+). The protein operates within glycolipid biosynthesis; lipid IV(A) biosynthesis; lipid IV(A) from (3R)-3-hydroxytetradecanoyl-[acyl-carrier-protein] and UDP-N-acetyl-alpha-D-glucosamine: step 6/6. Functionally, transfers the gamma-phosphate of ATP to the 4'-position of a tetraacyldisaccharide 1-phosphate intermediate (termed DS-1-P) to form tetraacyldisaccharide 1,4'-bis-phosphate (lipid IVA). The protein is Tetraacyldisaccharide 4'-kinase of Idiomarina loihiensis (strain ATCC BAA-735 / DSM 15497 / L2-TR).